A 474-amino-acid polypeptide reads, in one-letter code: Trigger factor (474 aa).

Residues glycine 171 to proline 258 form the PPIase FKBP-type domain. The interval threonine 441–alanine 474 is disordered. Residues aspartate 444–glutamate 456 are compositionally biased toward low complexity.

This sequence belongs to the FKBP-type PPIase family. Tig subfamily.

The protein localises to the cytoplasm. The enzyme catalyses [protein]-peptidylproline (omega=180) = [protein]-peptidylproline (omega=0). Involved in protein export. Acts as a chaperone by maintaining the newly synthesized protein in an open conformation. Functions as a peptidyl-prolyl cis-trans isomerase. In Synechococcus sp. (strain ATCC 27144 / PCC 6301 / SAUG 1402/1) (Anacystis nidulans), this protein is Trigger factor.